The chain runs to 500 residues: Glycerol-3-phosphate acyltransferase 7 (500 aa).

Helical transmembrane passes span 38–58 and 235–255; these read GLIR…LDVL and ALII…RIFV. An HXXXXD motif motif is present at residues 298–303; the sequence is HRTLMD.

This sequence belongs to the GPAT/DAPAT family. In terms of tissue distribution, weakly or not expressed in roots, leaves, seedlings, developing siliques and flower buds.

Its subcellular location is the membrane. The catalysed reaction is sn-glycerol 3-phosphate + an acyl-CoA = a 1-acyl-sn-glycero-3-phosphate + CoA. It participates in phospholipid metabolism; CDP-diacylglycerol biosynthesis; CDP-diacylglycerol from sn-glycerol 3-phosphate: step 1/3. In terms of biological role, esterifies acyl-group from acyl-ACP to the sn-1 position of glycerol-3-phosphate, an essential step in glycerolipid biosynthesis. This Arabidopsis thaliana (Mouse-ear cress) protein is Glycerol-3-phosphate acyltransferase 7 (GPAT7).